The chain runs to 883 residues: Glutamate receptor 2 (883 aa).

Positions 1–24 (MQKIMHISVLLSPILWGLIFGVSS) are cleaved as a signal peptide. The Extracellular portion of the chain corresponds to 25-543 (NSIQIGGLFP…GVFSFLDPLA (519 aa)). Cys78 and Cys330 are disulfide-bonded. N-linked (GlcNAc...) asparagine glycans are attached at residues Asn256, Asn370, Asn406, and Asn413. L-glutamate is bound by residues Pro499, Thr501, and Arg506. The helical transmembrane segment at 544 to 564 (YEIWMCIVFAYIGVSVVLFLV) threads the bilayer. Residues 565-591 (SRFSPYEWHTEEFEDGRETQSSESTNE) lie on the Cytoplasmic side of the membrane. An intramembrane region (helical; Pore-forming) is located at residues 592–607 (FGIFNSLWFSLGAFMR). An intramembrane segment occupies 608 to 610 (QGC). A lipid anchor (S-palmitoyl cysteine) is attached at Cys610. Over 611-616 (DISPRS) the chain is Cytoplasmic. The helical transmembrane segment at 617–637 (LSGRIVGGVWWFFTLIIISSY) threads the bilayer. Topologically, residues 638–812 (TANLAAFLTV…EKTSALSLSN (175 aa)) are extracellular. L-glutamate contacts are provided by Ser675 and Thr676. Phosphoserine; by PKC is present on Ser683. Ser717 carries the phosphoserine; by PKG modification. Glu726 lines the L-glutamate pocket. Cys739 and Cys794 are joined by a disulfide. Residues 813–833 (VAGVFYILVGGLGLAMLVALI) form a helical membrane-spanning segment. The Cytoplasmic portion of the chain corresponds to 834-883 (EFCYKSRAEAKRMKVAKNAQNINPSSSQNSQNFATYKEGYNVYGIESVKI). The S-palmitoyl cysteine moiety is linked to residue Cys836. Ser860 and Ser863 each carry phosphoserine. The tract at residues 867–877 (ATYKEGYNVYG) is required for interaction with IQSEC1. Tyr876 bears the Phosphotyrosine mark. Ser880 is subject to Phosphoserine.

It belongs to the glutamate-gated ion channel (TC 1.A.10.1) family. GRIA2 subfamily. As to quaternary structure, homotetramer or heterotetramer of pore-forming glutamate receptor subunits. Tetramers may be formed by the dimerization of dimers. May interact with MPP4. Forms a ternary complex with GRIP1 and CSPG4. Interacts with ATAD1 in an ATP-dependent manner. ATAD1-catalyzed ATP hydrolysis disrupts binding to ATAD1 and to GRIP1 and leads to AMPAR complex disassembly. Interacts with GRIP1 and GRIP2. Interacts with NSF via its C-terminus. Isoform 1, but not isoform 3, interacts with PICK1. Interacts with CACNG2. Interacts with GRIA1 and SYNDIG1. Part of a complex containing GRIA2, NSF and NAPA and/or NAPB. Interacts with SNX27 (via PDZ domain); the interaction is required for recycling to the plasma membrane when endocytosed and prevent degradation in lysosomes. Interacts with LRFN1. Found in a complex with GRIA1, GRIA3, GRIA4, CNIH2, CNIH3, CACNG2, CACNG3, CACNG4, CACNG5, CACNG7 and CACNG8. Interacts with CACNG5. Interacts with OLFM2. Interacts with AP4B1, AP4E1 and AP4M1; probably indirect it mediates the somatodendritic localization of GRIA2 in neurons. Forms a complex with GRIP1, NSG1 and STX12; controls the intracellular fate of AMPAR and the endosomal sorting of the GRIA2 subunit toward recycling and membrane targeting. Interacts with IQSEC1; the interaction is required for ARF6 activation. Interacts (heterotetramer form) with CNIH2 and CNIH3; this interaction promotes expression at the plasma membrane and extensively modulates their gating properties by slowing deactivation and desensitization kinetics. Post-translationally, phosphorylation at Tyr-876 is required for interaction with IQSEC1 and ARF6 activation, which in turn triggers AMPAR internalization for persistent synaptic depression. Palmitoylated. Depalmitoylated upon L-glutamate stimulation. ZDHHC3/GODZ specifically palmitoylates Cys-610, which leads to Golgi retention and decreased cell surface expression. In contrast, Cys-836 palmitoylation does not affect cell surface expression but regulates stimulation-dependent endocytosis. In terms of processing, N-glycosylated. Post-translationally, ubiquitinated by RNF167, leading to its degradation.

The protein localises to the cell membrane. The protein resides in the postsynaptic cell membrane. It localises to the postsynaptic density membrane. It carries out the reaction Ca(2+)(in) = Ca(2+)(out). The enzyme catalyses Na(+)(in) = Na(+)(out). Functionally, ionotropic glutamate receptor that functions as a ligand-gated cation channel, gated by L-glutamate and glutamatergic agonists such as alpha-amino-3-hydroxy-5-methyl-4-isoxazolepropionic acid (AMPA), quisqualic acid, and kainic acid. L-glutamate acts as an excitatory neurotransmitter at many synapses in the central nervous system and plays an important role in fast excitatory synaptic transmission. Binding of the excitatory neurotransmitter L-glutamate induces a conformation change, leading to the opening of the cation channel, and thereby converts the chemical signal to an electrical impulse upon entry of monovalent and divalent cations such as sodium and calcium. The receptor then desensitizes rapidly and enters in a transient inactive state, characterized by the presence of bound agonist. In the presence of CACNG4 or CACNG7 or CACNG8, shows resensitization which is characterized by a delayed accumulation of current flux upon continued application of L-glutamate. Through complex formation with NSG1, GRIP1 and STX12 controls the intracellular fate of AMPAR and the endosomal sorting of the GRIA2 subunit toward recycling and membrane targeting. The chain is Glutamate receptor 2 from Macaca fascicularis (Crab-eating macaque).